A 118-amino-acid polypeptide reads, in one-letter code: Cytochrome b-c1 complex subunit 7 (118 aa).

The tract at residues 1–32 (MVHLTKTLRFINNPGFRKFYYGLQGYNKYGLY) is igE-binding. Immunodominant epitope; induces specific IgE antibody production in mice. Causes degranulation of rat basophilic leukemia (RBL) cells and the release of beta-hexosaminidase from them.

The protein belongs to the UQCRB/QCR7 family. In terms of assembly, component of the ubiquinol-cytochrome c oxidoreductase (cytochrome b-c1 complex, complex III, CIII), a multisubunit enzyme composed of 3 respiratory subunits cytochrome b, cytochrome c1 and Rieske protein, 2 core protein subunits, and additional low-molecular weight protein subunits. The complex exists as an obligatory dimer and forms supercomplexes (SCs) in the inner mitochondrial membrane with cytochrome c oxidase (complex IV, CIV).

It localises to the mitochondrion inner membrane. Component of the ubiquinol-cytochrome c oxidoreductase, a multisubunit transmembrane complex that is part of the mitochondrial electron transport chain which drives oxidative phosphorylation. The respiratory chain contains 3 multisubunit complexes succinate dehydrogenase (complex II, CII), ubiquinol-cytochrome c oxidoreductase (cytochrome b-c1 complex, complex III, CIII) and cytochrome c oxidase (complex IV, CIV), that cooperate to transfer electrons derived from NADH and succinate to molecular oxygen, creating an electrochemical gradient over the inner membrane that drives transmembrane transport and the ATP synthase. The cytochrome b-c1 complex catalyzes electron transfer from ubiquinol to cytochrome c, linking this redox reaction to translocation of protons across the mitochondrial inner membrane, with protons being carried across the membrane as hydrogens on the quinol. In the process called Q cycle, 2 protons are consumed from the matrix, 4 protons are released into the intermembrane space and 2 electrons are passed to cytochrome c. This chain is Cytochrome b-c1 complex subunit 7, found in Dermatophagoides farinae (American house dust mite).